Consider the following 347-residue polypeptide: Gas vesicle ATPase GvpN (347 aa).

The segment at 1–50 (MTNSSRERKVRGSQIRTSRREKQDKNARNRTEKELTRLENHQTHRTKNGT) is disordered. Over residues 18–42 (SRREKQDKNARNRTEKELTRLENHQ) the composition is skewed to basic and acidic residues. 91 to 98 (GPTGCGKT) serves as a coordination point for ATP.

The protein belongs to the CbbQ/NirQ/NorQ/GpvN family. As to quaternary structure, forms homodimers, a GvpN-GvpO heterodimer, interacts with GvpC and GvpL, might interact with GvpA.

The protein localises to the gas vesicle. It is found in the cytoplasm. It catalyses the reaction ATP + H2O = ADP + phosphate + H(+). Functionally, an ATPase that functions in gas vesicle formation. A minor component of the gas vesicle, also found in soluble extracts. Gas vesicles are hollow, gas filled proteinaceous nanostructures found in some microorganisms. They allow positioning of halobacteria at the optimal depth for growth in the poorly aerated, shallow brine pools of their habitat. Its function is as follows. Expression of a 9.5 kb mc-vac DNA fragment containing 2 divergently transcribed regions (gvpD-gvpE-gvpF-gvpG-gvpH-gvpI-gvpJ-gvpK-gvpL-gvpM and gvpA-gvpC-gvpN-gvpO) allows H.volcanii to produce gas vesicles. The sequence is that of Gas vesicle ATPase GvpN from Haloferax mediterranei (strain ATCC 33500 / DSM 1411 / JCM 8866 / NBRC 14739 / NCIMB 2177 / R-4) (Halobacterium mediterranei).